The chain runs to 243 residues: DNA repair protein RecO (243 aa).

The protein belongs to the RecO family.

Involved in DNA repair and RecF pathway recombination. The chain is DNA repair protein RecO from Xylella fastidiosa (strain M23).